Consider the following 195-residue polypeptide: Putative NADH dehydrogenase/NAD(P)H nitroreductase RSc1004 (195 aa).

Belongs to the nitroreductase family. HadB/RutE subfamily. It depends on FMN as a cofactor.

The polypeptide is Putative NADH dehydrogenase/NAD(P)H nitroreductase RSc1004 (Ralstonia nicotianae (strain ATCC BAA-1114 / GMI1000) (Ralstonia solanacearum)).